Consider the following 88-residue polypeptide: Small ribosomal subunit protein bS16 (88 aa).

The protein belongs to the bacterial ribosomal protein bS16 family.

The sequence is that of Small ribosomal subunit protein bS16 from Leptospira borgpetersenii serovar Hardjo-bovis (strain L550).